The following is a 1453-amino-acid chain: Chromatin remodeling regulator CECR2 (1453 aa).

The segment at 170–237 (VQGRSNGELS…DLQTRNGSRG (68 aa)) is disordered. Residues 197–209 (TGKRRGRPPKRKK) are compositionally biased toward basic residues. The segment covering 210–222 (LQEEIISSEKQEE) has biased composition (basic and acidic residues). Positions 223–234 (NSLTSDLQTRNG) are enriched in polar residues. Ser402 is modified (phosphoserine). A Bromo domain is found at 414 to 518 (FELDDDFTAM…RCFHRAMTKH (105 aa)). Thr526 carries the post-translational modification Phosphothreonine. Disordered regions lie at residues 536 to 667 (EKRE…HPPF), 767 to 796 (HGTT…TLGH), 827 to 868 (GYMQ…GESM), 884 to 1020 (VCPP…DNSY), 1046 to 1072 (VVGE…LCPR), 1131 to 1308 (LASM…YLYG), 1331 to 1368 (MLQT…VATQ), and 1396 to 1453 (QTGT…LDQS). Position 551 is a phosphoserine (Ser551). Over residues 637-649 (GSLQGSDPTNLHG) the composition is skewed to polar residues. Pro residues predominate over residues 655–664 (EAPPGEPLQH). The segment covering 887–905 (PGVPYHPRQPTPPQLPGPF) has biased composition (pro residues). Ser983 bears the Phosphoserine mark. The segment covering 985 to 998 (QERETEDSQLKSDA) has biased composition (basic and acidic residues). Residues 999–1020 (SDSADTYKTSKNKNTWPLDNSY) show a composition bias toward polar residues. Asymmetric dimethylarginine occurs at positions 1166 and 1172. 2 stretches are compositionally biased toward low complexity: residues 1173-1187 (YSYQ…HPYQ) and 1202-1211 (QRSLPSQRSP). Polar residues predominate over residues 1228-1250 (NVLSSLQGCETLNTALTSPTQMD). The span at 1265–1289 (GPEEEKMDESVERPESPKEFLDLDN) shows a compositional bias: basic and acidic residues. Ser1280 carries the post-translational modification Phosphoserine. Polar residues-rich tracts occupy residues 1291–1304 (NAAT…STSD) and 1331–1346 (MLQT…SASH). Positions 1352–1364 (YPSPVPAHPPPHP) are enriched in pro residues.

As to quaternary structure, component of the CERF-1 ISWI chromatin remodeling complex (also called the CECR2-containing remodeling factor (CERF) complex) at least composed of CECR2 and SMARCA1. Component of the CERF-5 ISWI chromatin remodeling complex at least composed of CECR2 and SMARCA5/SNF2H. LUZP1 is detected as part of the CERF-1 and CERF-5 complexes in embryonic stem (ES) cells where it is involved in complex stabilization but is not detected in the complexes in the testis. Interacts with CCAR2; CCAR2 may form part of the CERF-1 and/or CEF-5 ISWI chromatin remodeling complexes in ES cells. Interacts with acetylated lysine residues on histone H2A and H3 (in vitro). Interacts with LRPPRC.

It localises to the nucleus. Functionally, regulatory subunit of the ATP-dependent CERF-1 and CERF-5 ISWI chromatin remodeling complexes, which form ordered nucleosome arrays on chromatin and facilitate access to DNA during DNA-templated processes such as DNA replication, transcription, and repair. The complexes do not have the ability to slide mononucleosomes to the center of a DNA template. The CERF-1 ISWI chromatin remodeling complex has a lower ATP hydrolysis rate than the CERF-5 ISWI chromatin remodeling complex. Plays a role in various processes during development: required during embryogenesis for neural tube closure and inner ear development. In adults, required for spermatogenesis, via the formation of ISWI-type chromatin complexes. In histone-modifying complexes, CECR2 recognizes and binds acylated histones: binds histones that are acetylated and/or butyrylated. May also be involved through its interaction with LRPPRC in the integration of cytoskeletal network with vesicular trafficking, nucleocytosolic shuttling, transcription, chromosome remodeling and cytokinesis. In Mus musculus (Mouse), this protein is Chromatin remodeling regulator CECR2.